The sequence spans 784 residues: MLGRKKNPETVQTESKSVESKTHDPLRRLGVLDDEDVLLMLQGSKMMKVRSQRWRKDRRLKLLEDCVTVWCESSKTSRKSNRQQTFSVTEVECVREGCQSECLRRMTDLVPEKNCFTVVFRGGRKSLDLCCHTQEEAERWVRGIRTLKDRVSNMSQKEKLDHWIRGYLRRADQNQDGKMSYDEVKHLLQLINIDLNEQYARTLFKKCDRSCDGRLDHVEIEEFCREMMRRPELDAVFRHYSGNGCVLTTLELRDFLGDQGEDASLVHAKSLIQTFELNDWAQKNLFMTQNGFTMYMLSKENDVFNPDHTHVYQDMSKPLAHYYISSSHNTYLTKDQVTSASSTEPYIRALNQGCRCVELDCWDGDKGEPIIYHGHTLTSKVLFKEVIETIAQYAFKASPYPLILSLENHCSVEQQAIMAQQLQSILGKKLLAKPLSDLPLKQLPSPEELKGRILLKGKKLNGLLGKTESWTSFTNSSDEESVAGGNKKESKKDLARSASTKLSPELSDLVVYCQSVPFSGFETANQRPPSVITSFSENEALKLIKDSGKLFVRNNSRQLSRIYPSAQRLQSSNFDPQDMWNAGCQMVALNFQTPGEQMDLNQGRFLPNGRCGYVLKPEFLCDPKSDFDPENTGGGPGHIPTQLTIRVISAQQLPKINTDKPNSIVDPQVWVEIHGVSIDKARAKTQRIDNNGFNPRWDCTVSFQLQLPELALVRFMVEDHDHKSKNDFIGQFTLPFTSLRTGYRHVHLLKADGSTLSPATLFIHVKVVRRGVHIKTVSERIGKA.

A disordered region spans residues 1-25 (MLGRKKNPETVQTESKSVESKTHDP). Residues 16-25 (KSVESKTHDP) show a composition bias toward basic and acidic residues. The PH domain maps to 38-149 (LLMLQGSKMM…WVRGIRTLKD (112 aa)). Positions 48 to 78 (KVRSQRWRKDRRLKLLEDCVTVWCESSKTSR) are substrate binding. EF-hand domains lie at 159-194 (KLDH…INID), 195-230 (LNEQ…MMRR), and 227-262 (MMRR…QGED). Ca(2+)-binding residues include Asp-172, Asn-174, Asp-176, Lys-178, Glu-183, Asp-208, Ser-210, Asp-212, Arg-214, and Glu-219. A PI-PLC X-box domain is found at 313–458 (QDMSKPLAHY…LKGRILLKGK (146 aa)). His-328 is a catalytic residue. Ca(2+)-binding residues include Asn-329, Glu-358, and Asp-360. His-373 is a catalytic residue. Glu-407 serves as a coordination point for Ca(2+). Substrate is bound by residues Lys-456 and Lys-458. The segment at 473 to 498 (FTNSSDEESVAGGNKKESKKDLARSA) is disordered. The span at 486 to 495 (NKKESKKDLA) shows a compositional bias: basic and acidic residues. Residues 506 to 621 (LSDLVVYCQS…GYVLKPEFLC (116 aa)) enclose the PI-PLC Y-box domain. The substrate site is built by Ser-534 and Arg-561. The C2 domain maps to 621–750 (CDPKSDFDPE…TGYRHVHLLK (130 aa)). Ile-664, Asp-666, Asn-690, Asp-719, and Asp-721 together coordinate Ca(2+).

Ca(2+) is required as a cofactor.

It is found in the membrane. Its subcellular location is the cytoplasm. It localises to the cleavage furrow. The enzyme catalyses a 1,2-diacyl-sn-glycero-3-phospho-(1D-myo-inositol-4,5-bisphosphate) + H2O = 1D-myo-inositol 1,4,5-trisphosphate + a 1,2-diacyl-sn-glycerol + H(+). In terms of biological role, hydrolyzes the phosphatidylinositol 4,5-bisphosphate (PIP2) to generate 2 second messenger molecules diacylglycerol (DAG) and inositol 1,4,5-trisphosphate (IP3). DAG mediates the activation of protein kinase C (PKC), while IP3 releases Ca(2+) from intracellular stores. In Danio rerio (Zebrafish), this protein is 1-phosphatidylinositol 4,5-bisphosphate phosphodiesterase delta-3-A (plcd3a).